Consider the following 74-residue polypeptide: MSAEESEEGATPAEVIEVVGKTGMHGEAMQVKCRIQEGGNQGRIITRNVLGPVRVGDVIQLKETAREADSIGGQ.

This sequence belongs to the eukaryotic ribosomal protein eS28 family.

The chain is Small ribosomal subunit protein eS28 from Halobacterium salinarum (strain ATCC 29341 / DSM 671 / R1).